The chain runs to 410 residues: Bifunctional malic/malolactic enzyme (410 aa).

The active-site Proton donor is the tyrosine 36. The Proton acceptor role is filled by lysine 91. 3 residues coordinate a divalent metal cation: glutamate 133, aspartate 134, and aspartate 159. Residues 192–195 (AGAA), asparagine 286, and asparagine 317 contribute to the NADP(+) site.

This sequence belongs to the malic enzymes family. Interacts with BrxC. Requires Mg(2+) as cofactor. Mn(2+) is required as a cofactor.

The enzyme catalyses (S)-malate + NADP(+) = pyruvate + CO2 + NADPH. It catalyses the reaction oxaloacetate + H(+) = pyruvate + CO2. The catalysed reaction is (S)-malate + H(+) = (S)-lactate + CO2. With respect to regulation, NADPH is a strong modulator that switches activity from a pyruvate-producing malic enzyme to a lactate-generating malolactic enzyme. Functionally, bifunctional enzyme with both malic and malolactic enzyme activities. In the absence of NADPH, catalyzes the reversible decarboxylation of malate to pyruvate. Can use NAD and NADP, but with a very strong preference for NADP. In the presence of excess NADPH, catalyzes the non-oxidative decarboxylation of malate to lactate. During growth on glucose, contributes to NADPH balancing via oxidation of the NADPH produced in excess by other enzymatic reactions. Can also catalyze the decarboxylation of oxaloacetate. This chain is Bifunctional malic/malolactic enzyme (ytsJ), found in Bacillus subtilis (strain 168).